We begin with the raw amino-acid sequence, 1016 residues long: MLVGSQSFSPGGPNGIIRSQSFAGFSGLQERRSRCNSFIENSSAVKKPQAKLKKMHNLGHKNSSPPKEPQPKRVEEVYRALKNGLDEYLEVHQTELDKLTTQLKDMRRNSRLGVLYDLDKQIKTIERYMRRLEFHISKVDELYEAYCIQRRLQDGASKMKQAFATSPASKAARESLAEINRSYKEYTENMCAIEAELEKQLGEFSIKMKGLAGFARLCPGDQYEIFMKYGRQRWKLKGRIEVNGKQSWDGEEMVFLPLIVGFISIKVTELKGLATHLLVGSVTCETKELFAARPQVVAVDINDLGTIKLNLEITWYPFDVEDMTPSSGAGNKVAALQRRMSMYSQGTPETPTFKDHSFFSNLPDDIFENGKAAEEKMPLSLSFSDLPNGDCTLAPGPADSLPGACAANPEITITSTELPPGSQSSQNEGLKDSSSASCSSSSREGSEPRPHPEGETQGLGKPEGCPVATGARPERLFLQKGVAEALLQEALLQEPSELKPVELDTFEGNITKQLVKRLTSAEVPAATERLLSEGSISAESEGCRSFLDGSLEDAFNGLFLALEPHKEQYKEFQDLNQEVMHLDDILKCKPAVSRSRSSSLSLTVESALESFDFLNTSDFDEEEDGDEVCNVGGGADSVFSDTETEKNSYRSVHPEARGHLSEALTEDTGVGTSVAGSPLPLTTGNESLDLTIIRHLQYCTQLVQQIVLSSKTPFVASNLLEKLSRQIQVMEKLSAVSDENIGNISSVIEAIPEFHKKLSLLSFWTKCCTPIGVYHSSADRVIKQLEASFARTVNRDYPGLADPVFHTLVSQILDRAEPLLPASLSSEVITVFQYYSYFTSHGVSDLESYLNQLAKQVSVVQTLQSLRDEKLLQAVSDLAPGSFPAPQEEVLRTLALLLTGEDSGASEAVTLYLTAASRSEHFREKALLYYCEALTKTDFRLQKAACLALKSLKATESIKMLVTLCQSDTEEIRNVASETLLSLGEDGRLAYEQLDKFPRDCVKVGGRLASEVATAF.

Phosphoserine is present on residues serine 21 and serine 37. The interval 44–73 (AVKKPQAKLKKMHNLGHKNSSPPKEPQPKR) is disordered. Over residues 48 to 59 (PQAKLKKMHNLG) the composition is skewed to basic residues. The interval 55–113 (MHNLGHKNSSPPKEPQPKRVEEVYRALKNGLDEYLEVHQTELDKLTTQLKDMRRNSRLG) is involved in cell filopodia formation. Positions 85–112 (LDEYLEVHQTELDKLTTQLKDMRRNSRL) form a coiled coil. Phosphoserine is present on serine 341. Over residues 414-428 (TSTELPPGSQSSQNE) the composition is skewed to polar residues. Residues 414–469 (TSTELPPGSQSSQNEGLKDSSSASCSSSSREGSEPRPHPEGETQGLGKPEGCPVAT) are disordered. The span at 433 to 442 (SSSASCSSSS) shows a compositional bias: low complexity. A compositionally biased stretch (basic and acidic residues) spans 444-454 (EGSEPRPHPEG). Serine 520 and serine 532 each carry phosphoserine. The disordered stretch occupies residues 636–656 (DSVFSDTETEKNSYRSVHPEA). Residues 643-656 (ETEKNSYRSVHPEA) are compositionally biased toward basic and acidic residues.

The protein belongs to the RIPOR family. In terms of assembly, homooligomer; homooligomerization is regulated by RHOC and leads to the formation of concatemers through the association of N- and C-termini. Interacts (phosphorylated form) with 14-3-3 proteins; these interactions occur during myogenic cell differentiation and also induces T cell proliferation arrest. Interacts (phosphorylated form) with HDAC6; this interaction occurs during early myogenic differentiation, prevents HDAC6 to deacetylate tubulin and also induces T cell proliferation arrest. Interacts with DYSF; this interaction occurs during early myogenic differentiation. Interacts with MYOF. Interacts (via active GTP- or inactive GDP-bound forms) with RHOA; this interaction is direct, blocks the loading of GTP to RHOA and decreases upon chemokine CCL19 stimulation in primary T lymphocytes. Interacts with RHOC. Interacts (via phosphorylated form) with YWHAB; this interaction occurs in a chemokine-dependent manner and does not compete for binding of RIPOR2 with RHOA nor blocks inhibition of RIPOR2-mediated RHOA activity. Interacts with YWHAE. Interacts with YWHAQ. Post-translationally, phosphorylated. Chemokine-induced phosphorylation in neutrophils occurs in a PKC- and AKT-dependent manner, resulting in RIPOR2 interaction with YWHAB and stabilization. Phosphorylated by PKCA, AKT1 and MAPKAPK1A; in vitro.

The protein localises to the cytoplasm. Its subcellular location is the cytoskeleton. The protein resides in the cell projection. It localises to the filopodium. It is found in the apical cell membrane. The protein localises to the stereocilium. Its subcellular location is the stereocilium membrane. Functionally, acts as an inhibitor of the small GTPase RHOA and plays several roles in the regulation of myoblast and hair cell differentiation, lymphocyte T proliferation and neutrophil polarization. Plays a role in fetal mononuclear myoblast differentiation by promoting filopodia and myotube formation. Maintains naive T lymphocytes in a quiescent state and prevents chemokine-induced T lymphocyte responses, such as cell adhesion, polarization and migration. Involved also in the regulation of neutrophil polarization, chemotaxis and adhesion. Required for normal development of inner and outer hair cell stereocilia within the cochlea of the inner ear. Plays a role for maintaining the structural organization of the basal domain of stereocilia. Involved in mechanosensory hair cell function. Required for normal hearing. This chain is Rho family-interacting cell polarization regulator 2, found in Bos taurus (Bovine).